Reading from the N-terminus, the 843-residue chain is Molybdenum cofactor sulfurase (843 aa).

Lysine 241 bears the N6-(pyridoxal phosphate)lysine mark. Residue cysteine 405 is part of the active site. Positions 657 to 836 (QYLRKFVMPG…LMVGDIVIPS (180 aa)) constitute an MOSC domain.

This sequence belongs to the class-V pyridoxal-phosphate-dependent aminotransferase family. MOCOS subfamily. It depends on pyridoxal 5'-phosphate as a cofactor.

The catalysed reaction is Mo-molybdopterin + L-cysteine + AH2 = thio-Mo-molybdopterin + L-alanine + A + H2O. Functionally, sulfurates the molybdenum cofactor. Sulfation of molybdenum is essential for xanthine dehydrogenase (XDH) and aldehyde oxidase (ADO) enzymes in which molybdenum cofactor is liganded by 1 oxygen and 1 sulfur atom in active form. The protein is Molybdenum cofactor sulfurase of Aspergillus fumigatus (strain CBS 144.89 / FGSC A1163 / CEA10) (Neosartorya fumigata).